A 265-amino-acid chain; its full sequence is 5'-nucleotidase SurE (265 aa).

Residues Asp-12, Asp-13, Ser-43, and Asn-91 each coordinate a divalent metal cation.

Belongs to the SurE nucleotidase family. Requires a divalent metal cation as cofactor.

The protein resides in the cytoplasm. The catalysed reaction is a ribonucleoside 5'-phosphate + H2O = a ribonucleoside + phosphate. In terms of biological role, nucleotidase that shows phosphatase activity on nucleoside 5'-monophosphates. This chain is 5'-nucleotidase SurE, found in Haloquadratum walsbyi (strain DSM 16790 / HBSQ001).